The sequence spans 196 residues: GTP cyclohydrolase-2 (196 aa).

49–53 (RIHSE) provides a ligand contact to GTP. Zn(2+) is bound by residues C54, C65, and C67. Residues Q70, 92–94 (EGR), and T114 each bind GTP. D126 serves as the catalytic Proton acceptor. The active-site Nucleophile is the R128. GTP contacts are provided by T149 and K154.

The protein belongs to the GTP cyclohydrolase II family. As to quaternary structure, homodimer. Zn(2+) serves as cofactor.

The enzyme catalyses GTP + 4 H2O = 2,5-diamino-6-hydroxy-4-(5-phosphoribosylamino)-pyrimidine + formate + 2 phosphate + 3 H(+). It participates in cofactor biosynthesis; riboflavin biosynthesis; 5-amino-6-(D-ribitylamino)uracil from GTP: step 1/4. Functionally, catalyzes the conversion of GTP to 2,5-diamino-6-ribosylamino-4(3H)-pyrimidinone 5'-phosphate (DARP), formate and pyrophosphate. The chain is GTP cyclohydrolase-2 from Buchnera aphidicola subsp. Schizaphis graminum (strain Sg).